A 218-amino-acid polypeptide reads, in one-letter code: Pyridoxine/pyridoxamine 5'-phosphate oxidase (218 aa).

Residues 14-17 (RREY) and Lys72 contribute to the substrate site. FMN-binding positions include 67 to 72 (RIVLLK), 82 to 83 (YT), Arg88, Lys89, and Gln111. The substrate site is built by Tyr129, Arg133, and Ser137. FMN contacts are provided by residues 146–147 (QS) and Trp191. A substrate-binding site is contributed by 197 to 199 (RLH). Arg201 is an FMN binding site.

Belongs to the pyridoxamine 5'-phosphate oxidase family. In terms of assembly, homodimer. The cofactor is FMN.

The catalysed reaction is pyridoxamine 5'-phosphate + O2 + H2O = pyridoxal 5'-phosphate + H2O2 + NH4(+). It catalyses the reaction pyridoxine 5'-phosphate + O2 = pyridoxal 5'-phosphate + H2O2. It functions in the pathway cofactor metabolism; pyridoxal 5'-phosphate salvage; pyridoxal 5'-phosphate from pyridoxamine 5'-phosphate: step 1/1. It participates in cofactor metabolism; pyridoxal 5'-phosphate salvage; pyridoxal 5'-phosphate from pyridoxine 5'-phosphate: step 1/1. Functionally, catalyzes the oxidation of either pyridoxine 5'-phosphate (PNP) or pyridoxamine 5'-phosphate (PMP) into pyridoxal 5'-phosphate (PLP). The sequence is that of Pyridoxine/pyridoxamine 5'-phosphate oxidase from Salmonella typhi.